The chain runs to 415 residues: Teichoic acid D-alanyltransferase (415 aa).

Residues 1–16 (MIDFLKQLPHLEPYGN) are Extracellular-facing. A helical transmembrane segment spans residues 17-36 (PFYFIYLGIALLPIFIGLFF). The Cytoplasmic portion of the chain corresponds to 37–40 (KKRF). A helical transmembrane segment spans residues 41-56 (AIYECLVSITFIVLAL). At 57–60 (TGTH) the chain is on the extracellular side. Residues 61-87 (ASQILALLFYIVWQIIWVYSYKRYRSQ) traverse the membrane as a helical segment. At 88–90 (RDN) the chain is on the cytoplasmic side. The chain crosses the membrane as a helical span at residues 91 to 115 (KWVFYLHSFLVVLPLILVKVEPTIN). Residues 116 to 125 (GTQSLLNFLG) are Extracellular-facing. Residues 126 to 142 (ISYLTFRAVGMIIEMRD) traverse the membrane as a helical segment. Over 143–149 (GVLKEFT) the chain is Cytoplasmic. Residues 150–179 (LGEFLRFMLFMPTFTSGPIDRFKRFNEDYQ) lie within the membrane without spanning it. Residues 180–183 (SIPN) lie on the Cytoplasmic side of the membrane. Residues 184 to 227 (RDELLNMLEQAVKYIMLGFLYKFVLAQIFGSMLLPPLKAQALSQ) form a helical membrane-spanning segment. The Extracellular segment spans residues 228-232 (GGIFN). A helical membrane pass occupies residues 233 to 264 (LPTLGVMYVYGFDLFFDFAGYSMFALAVSNLM). The Cytoplasmic segment spans residues 265–274 (GIKSPINFDK). Residues 275–311 (PFISRDMKEFWNRWHMSLSFWFRDFVFMRLVIVLMRN) lie within the membrane without spanning it. The Cytoplasmic segment spans residues 312–316 (KVFKN). A helical transmembrane segment spans residues 317–336 (RNTTSNVAYIINMMVMGFWH). Residue H336 is part of the active site. Residues 337–339 (GIT) lie on the Extracellular side of the membrane. A helical membrane pass occupies residues 340–373 (WYYIAYGIFHGIGLVINDAWLRKKKTINKDRKKA). Topologically, residues 374-381 (GLKPLPEN) are cytoplasmic. The helical transmembrane segment at 382–404 (KWTKALGIFITFNTVMLSFLIFS) threads the bilayer. The Extracellular segment spans residues 405–415 (GFLNDLWFTKK).

It belongs to the membrane-bound acyltransferase family.

The protein resides in the cell membrane. It functions in the pathway cell wall biogenesis; lipoteichoic acid biosynthesis. In terms of biological role, O-acyltransferase that catalyzes D-alanylation of both teichoic acid and lipoteichoic acid (LTA). D-alanylation of LTA plays an important role in modulating the properties of the cell wall in Gram-positive bacteria, influencing the net charge of the cell wall. Catalyzes D-alanylation from DltC carrier protein. In Streptococcus thermophilus (strain ATCC BAA-250 / LMG 18311), this protein is Teichoic acid D-alanyltransferase.